A 702-amino-acid chain; its full sequence is Soluble guanylate cyclase gcy-31 (702 aa).

Residue histidine 104 coordinates heme. Residues 368–406 (TQQSAELKLLLHQEAQKSRNMRENMNRLKKERRRTDKLL) are a coiled coil. Residues 435–564 (TILFTDIVEF…ETVYVANKME (130 aa)) enclose the Guanylate cyclase domain. Mg(2+) contacts are provided by aspartate 440 and aspartate 484. The disordered stretch occupies residues 614-702 (RHGPHRVPSP…QDLTPRKSIT (89 aa)). Residues 633-643 (SQTEDDDDDEL) show a composition bias toward acidic residues. Residues 683 to 695 (RNSNKTPRQSQDL) are compositionally biased toward polar residues.

Belongs to the adenylyl cyclase class-4/guanylyl cyclase family. As to quaternary structure, heterodimer; with other soluble guanylate cyclases. The cofactor is heme. As to expression, expressed in a pair of bilaterally symmetric neurons in the head.

It is found in the cytoplasm. The catalysed reaction is GTP = 3',5'-cyclic GMP + diphosphate. Its activity is regulated as follows. May be regulated by molecular oxygen. Probably not activated by nitric oxide (NO). Synthesizes cyclic GMP (cGMP) from GTP. May play a role in embryogenesis. This Caenorhabditis elegans protein is Soluble guanylate cyclase gcy-31 (gcy-31).